A 452-amino-acid polypeptide reads, in one-letter code: Pup--protein ligase (452 aa).

Glu-9 is a Mg(2+) binding site. Position 53 (Arg-53) interacts with ATP. Tyr-55 is a Mg(2+) binding site. The active-site Proton acceptor is the Asp-57. Residue Glu-63 coordinates Mg(2+). ATP is bound by residues Thr-66 and Trp-419.

It belongs to the Pup ligase/Pup deamidase family. Pup-conjugating enzyme subfamily.

The catalysed reaction is ATP + [prokaryotic ubiquitin-like protein]-L-glutamate + [protein]-L-lysine = ADP + phosphate + N(6)-([prokaryotic ubiquitin-like protein]-gamma-L-glutamyl)-[protein]-L-lysine.. It functions in the pathway protein degradation; proteasomal Pup-dependent pathway. Its pathway is protein modification; protein pupylation. Functionally, catalyzes the covalent attachment of the prokaryotic ubiquitin-like protein modifier Pup to the proteasomal substrate proteins, thereby targeting them for proteasomal degradation. This tagging system is termed pupylation. The ligation reaction involves the side-chain carboxylate of the C-terminal glutamate of Pup and the side-chain amino group of a substrate lysine. The sequence is that of Pup--protein ligase from Mycobacterium avium (strain 104).